The following is a 245-amino-acid chain: Lytic switch protein BZLF1 (245 aa).

The segment at 1-167 is transactivation; sequence MMDPNSTSED…RTRKPLQPES (167 aa). Phosphothreonine is present on residues T14 and T159. Positions 140–167 are disordered; the sequence is QLADIGAPQPAPAAAPARRTRKPLQPES. Positions 157–194 match the Bipartite nuclear localization signal motif; sequence RRTRKPLQPESLEECDSELDIKRYKNRVASRKCRAKFK. Residues S167, S173, and S186 each carry the phosphoserine modification. Positions 178–195 are basic motif; that stretch reads KRYKNRVASRKCRAKFKH. In terms of domain architecture, bZIP spans 178 to 228; sequence KRYKNRVASRKCRAKFKHLLQHYREVASAKSSENDRLRLLLKQMCPSLDVD. The tract at residues 196-228 is leucine-zipper; it reads LLQHYREVASAKSSENDRLRLLLKQMCPSLDVD. The tract at residues 229-245 is accessory activation domain; sequence SIIPRTPDVLHEDLLNF.

This sequence belongs to the bZIP family. As to quaternary structure, homodimer. Interacts (via b-ZIP domain) with the DNA polymerase processivity factor BMRF1 (via N-terminus); this interaction may inhibit BZLF1-induced transcription of the BMRF1 promoter. Interacts with human UBN1, CRTC2 and RACK1. Interacts (via N-terminus) with human PAX5 (via N-terminus); this interaction inhibits BZLF1-mediated lytic viral reactivation. Interacts (via leucine-zipper domain) with host CEBPA; this interaction induces G1 host cell cycle arrest. Interacts (via C-terminus) with host TP53BP1 (via C-terminus); this interaction is involved in the activation of the viral lytic cycle. Interacts with host chromatin-remodeling ATPase INO80; this interaction participates to the activation of early lytic viral genes by BZLF1. Interacts with host regulator of chromatin SMARCA5/hSNF2H; this interaction participates to the activation of early lytic viral genes by BZLF1. Interacts with host PLSCR1/Phospholipid scramblase 1; this interaction negatively regulates the transcriptional regulatory activity of BZLF1 by preventing the formation of the BZLF1-CBP complex.

Its subcellular location is the host nucleus. Its function is as follows. Transcription factor that acts as a molecular switch to induce the transition from the latent to the lytic or productive phase of the virus cycle. Mediates the switch from the latent to the lytic cycle of infection in cells containing a highly methylated viral genome. Probably binds to silenced chromatin and recruits host chromatin-remodeling enzymes. Regulates this switch by binding to 2 types of ZEBRA response elements (ZREs): the CpG-free AP-1 like elements (latency) and the methylated CpG-containing elements (lytic replication). Activates preferentially the methylated forms of the viral lytic R (BRLF1) and Na (BRRF1) gene promoters, the latters being the first genes activated during Z-mediated reactivation in latently infected cells. BZLF1 and BRLF1 act together to trigger lytic replication. Also binds the lytic origin of replication, oriLyt. Induces G1 cell cycle arrest by stabilizing the host CCAAT/enhancer binding protein CEBPA. This function is important because the lytic cycle preferentially takes place in host cells arrested in G1. The chain is Lytic switch protein BZLF1 from Epstein-Barr virus (strain AG876) (HHV-4).